The primary structure comprises 328 residues: Phosphate acyltransferase (328 aa).

Belongs to the PlsX family. Homodimer. Probably interacts with PlsY.

Its subcellular location is the cytoplasm. The catalysed reaction is a fatty acyl-[ACP] + phosphate = an acyl phosphate + holo-[ACP]. Its pathway is lipid metabolism; phospholipid metabolism. Catalyzes the reversible formation of acyl-phosphate (acyl-PO(4)) from acyl-[acyl-carrier-protein] (acyl-ACP). This enzyme utilizes acyl-ACP as fatty acyl donor, but not acyl-CoA. The protein is Phosphate acyltransferase of Mycoplasma pneumoniae (strain ATCC 29342 / M129 / Subtype 1) (Mycoplasmoides pneumoniae).